Reading from the N-terminus, the 202-residue chain is Holliday junction branch migration complex subunit RuvA (202 aa).

Positions 1–65 are domain I; it reads MIAYVEGRVA…EDALELFGFS (65 aa). The segment at 66-144 is domain II; that stretch reads TWDERQTFMV…VEDLPAGLVL (79 aa). A flexible linker region spans residues 145–155; the sequence is AGGAAPGGVFR. The segment at 155-202 is domain III; sequence RDALAGLGNLGYLEDEAAPVLKEVLKAEPDLDVAGALRAALKALARGR.

This sequence belongs to the RuvA family. Homotetramer. Forms an RuvA(8)-RuvB(12)-Holliday junction (HJ) complex. HJ DNA is sandwiched between 2 RuvA tetramers; dsDNA enters through RuvA and exits via RuvB. An RuvB hexamer assembles on each DNA strand where it exits the tetramer. Each RuvB hexamer is contacted by two RuvA subunits (via domain III) on 2 adjacent RuvB subunits; this complex drives branch migration. In the full resolvosome a probable DNA-RuvA(4)-RuvB(12)-RuvC(2) complex forms which resolves the HJ.

Its subcellular location is the cytoplasm. The RuvA-RuvB-RuvC complex processes Holliday junction (HJ) DNA during genetic recombination and DNA repair, while the RuvA-RuvB complex plays an important role in the rescue of blocked DNA replication forks via replication fork reversal (RFR). RuvA specifically binds to HJ cruciform DNA, conferring on it an open structure. The RuvB hexamer acts as an ATP-dependent pump, pulling dsDNA into and through the RuvAB complex. HJ branch migration allows RuvC to scan DNA until it finds its consensus sequence, where it cleaves and resolves the cruciform DNA. This Nitratidesulfovibrio vulgaris (strain DSM 19637 / Miyazaki F) (Desulfovibrio vulgaris) protein is Holliday junction branch migration complex subunit RuvA.